The sequence spans 356 residues: Phosphoribosyl pyrophosphate synthase-associated protein 1 (356 aa).

Residue methionine 1 is modified to N-acetylmethionine. Serine 177 and serine 215 each carry phosphoserine.

Belongs to the ribose-phosphate pyrophosphokinase family. Binds to PRPS1 and PRPS2. Ubiquitous.

Seems to play a negative regulatory role in 5-phosphoribose 1-diphosphate synthesis. The protein is Phosphoribosyl pyrophosphate synthase-associated protein 1 (Prpsap1) of Rattus norvegicus (Rat).